The primary structure comprises 119 residues: Beta-2-microglobulin (119 aa).

Positions 1–20 (MARSVTVIFLVLVSLAVVLA) are cleaved as a signal peptide. The Ig-like C1-type domain occupies 25-114 (PQIQVYSRHP…VTLKEPKTVT (90 aa)). Residues Cys-45 and Cys-100 are joined by a disulfide bond.

The protein belongs to the beta-2-microglobulin family. As to quaternary structure, heterodimer of an alpha chain and a beta chain. Beta-2-microglobulin is the beta-chain of major histocompatibility complex class I molecules. Forms a heterotrimer with MR1 and a metabolite antigen.

The protein resides in the secreted. In terms of biological role, component of the class I major histocompatibility complex (MHC). Involved in the presentation of peptide antigens to the immune system. The polypeptide is Beta-2-microglobulin (B2m) (Rattus norvegicus (Rat)).